The chain runs to 305 residues: GTP cyclohydrolase FolE2 (305 aa).

The protein belongs to the GTP cyclohydrolase IV family.

It carries out the reaction GTP + H2O = 7,8-dihydroneopterin 3'-triphosphate + formate + H(+). The protein operates within cofactor biosynthesis; 7,8-dihydroneopterin triphosphate biosynthesis; 7,8-dihydroneopterin triphosphate from GTP: step 1/1. Its function is as follows. Converts GTP to 7,8-dihydroneopterin triphosphate. This is GTP cyclohydrolase FolE2 from Xanthomonas axonopodis pv. citri (strain 306).